The primary structure comprises 118 residues: Large ribosomal subunit protein bL19 (118 aa).

Belongs to the bacterial ribosomal protein bL19 family.

In terms of biological role, this protein is located at the 30S-50S ribosomal subunit interface and may play a role in the structure and function of the aminoacyl-tRNA binding site. This is Large ribosomal subunit protein bL19 from Aliarcobacter butzleri (strain RM4018) (Arcobacter butzleri).